Consider the following 350-residue polypeptide: Protein FAM118B (350 aa).

An N-acetylalanine modification is found at Ala-2. Phosphoserine is present on Ser-9.

It belongs to the FAM118 family.

It localises to the nucleus. Its subcellular location is the cajal body. Functionally, may play a role in Cajal bodies formation. The polypeptide is Protein FAM118B (FAM118B) (Macaca fascicularis (Crab-eating macaque)).